The chain runs to 490 residues: Cobyric acid synthase (490 aa).

Residues 252 to 428 (ARRVAVVRLP…WHGAFEGDAL (177 aa)) enclose the GATase cobBQ-type domain. The Nucleophile role is filled by Cys333. His420 is a catalytic residue.

This sequence belongs to the CobB/CobQ family. CobQ subfamily.

It participates in cofactor biosynthesis; adenosylcobalamin biosynthesis. In terms of biological role, catalyzes amidations at positions B, D, E, and G on adenosylcobyrinic A,C-diamide. NH(2) groups are provided by glutamine, and one molecule of ATP is hydrogenolyzed for each amidation. This Mycolicibacterium vanbaalenii (strain DSM 7251 / JCM 13017 / BCRC 16820 / KCTC 9966 / NRRL B-24157 / PYR-1) (Mycobacterium vanbaalenii) protein is Cobyric acid synthase.